Here is a 392-residue protein sequence, read N- to C-terminus: Flagellar P-ring protein (392 aa).

The N-terminal stretch at 1 to 38 (MKPFARRALLTAEPIRALLLAASLLAATLGLMPAEAFG) is a signal peptide.

The protein belongs to the FlgI family. The basal body constitutes a major portion of the flagellar organelle and consists of four rings (L,P,S, and M) mounted on a central rod.

It localises to the periplasm. The protein resides in the bacterial flagellum basal body. Assembles around the rod to form the L-ring and probably protects the motor/basal body from shearing forces during rotation. This is Flagellar P-ring protein from Paramagnetospirillum magneticum (strain ATCC 700264 / AMB-1) (Magnetospirillum magneticum).